The sequence spans 485 residues: Membrane-bound lytic murein transglycosylase F (485 aa).

Residues 1–29 form the signal peptide; it reads MFAHTALRQRCAKWLLATGLFLLLGACVE. The non-LT domain stretch occupies residues 30–267; it reads KPSTLERVKE…RLKDRYYGHV (238 aa). The tract at residues 268–485 is LT domain; it reads DVLGYVGAYT…DKPADKSSPM (218 aa). E314 is an active-site residue. Residues 465-485 form a disordered region; sequence EGNLHVPGVNKDKPADKSSPM. Positions 474-485 are enriched in basic and acidic residues; sequence NKDKPADKSSPM.

In the N-terminal section; belongs to the bacterial solute-binding protein 3 family. It in the C-terminal section; belongs to the transglycosylase Slt family.

The protein localises to the cell outer membrane. It carries out the reaction Exolytic cleavage of the (1-&gt;4)-beta-glycosidic linkage between N-acetylmuramic acid (MurNAc) and N-acetylglucosamine (GlcNAc) residues in peptidoglycan, from either the reducing or the non-reducing ends of the peptidoglycan chains, with concomitant formation of a 1,6-anhydrobond in the MurNAc residue.. Its function is as follows. Murein-degrading enzyme that degrades murein glycan strands and insoluble, high-molecular weight murein sacculi, with the concomitant formation of a 1,6-anhydromuramoyl product. Lytic transglycosylases (LTs) play an integral role in the metabolism of the peptidoglycan (PG) sacculus. Their lytic action creates space within the PG sacculus to allow for its expansion as well as for the insertion of various structures such as secretion systems and flagella. The polypeptide is Membrane-bound lytic murein transglycosylase F (Pseudomonas putida (strain ATCC 700007 / DSM 6899 / JCM 31910 / BCRC 17059 / LMG 24140 / F1)).